The sequence spans 304 residues: MLYGFDIGGTKIELAVFNDKLERQYTERVETPKDSYEQWLDVIVNLVEKADQKFACKGSVGLGLPGFVNHETGIAEITNIRVADNKPIIKDLSERLGREVRAENDANCFALSEAWDEENQQYPFVLGLILGTGFGGGLIFNGKVHSGQIGMAGELGHLQLNYHALKLLGWDKAPIYDCGCGNRACLDTYLSGRGFEMLYRDLKGEALSAKEIIERFYAADKTAVDFVGLFIELCAISLGNIITALDPHVIVLGGGLSNFDYLYEALPKALPKHLMRSAKVPVIKKAKYGDSGGVRGAAALFLTK.

Residues 4–11 (GFDIGGTK) and 133–140 (GFGGGLIF) contribute to the ATP site. Zn(2+)-binding residues include H157, C178, C180, and C185.

Belongs to the ROK (NagC/XylR) family. NagK subfamily.

It catalyses the reaction N-acetyl-D-glucosamine + ATP = N-acetyl-D-glucosamine 6-phosphate + ADP + H(+). Its pathway is cell wall biogenesis; peptidoglycan recycling. Its function is as follows. Catalyzes the phosphorylation of N-acetyl-D-glucosamine (GlcNAc) derived from cell-wall degradation, yielding GlcNAc-6-P. The sequence is that of N-acetyl-D-glucosamine kinase from Mannheimia succiniciproducens (strain KCTC 0769BP / MBEL55E).